Consider the following 742-residue polypeptide: F-box only protein 30 (742 aa).

A TRAF-type zinc finger spans residues 49–108 (EHRLLCPFERVPCLNSNFGCPFTLARNKVAEHLEMCPASVVCCTMEWNRWPVSYSDRKSY). The tract at residues 214–242 (SLQGTTNEMDEESNRESSQDRNAKDQDHL) is disordered. Basic and acidic residues predominate over residues 225–242 (ESNRESSQDRNAKDQDHL). S379 is subject to Phosphoserine. The F-box domain occupies 607-653 (SDHLSSLPFEVLQHIAGFLDGFSLCQLACVSRLMRDICGSLLQSRGM).

As to quaternary structure, part of a SCF (SKP1-cullin-F-box) protein ligase complex. Interacts with SKP1, CUL1 and RBX1/ROC1. Auto-ubiquitinated. In terms of processing, may be neddylated. Neddylation may be required for E3 ligase activity.

It participates in protein modification; protein ubiquitination. Functionally, substrate-recognition component of the SCF (SKP1-CUL1-F-box protein)-type E3 ubiquitin ligase complex. Required for muscle atrophy following denervation. This is F-box only protein 30 (Fbxo30) from Rattus norvegicus (Rat).